Consider the following 160-residue polypeptide: MSVVKEPTLADFYVRKKLYTGMGHNYYGEPAWPNDLLYMFPVVILGTLFCLVSLAVLETGSIGDASDPFKTPEEILPEWYFYPVFQILRTVPSKLIGILLMAGVPVGLATVPFIENINQFQNPFRRPIASAVFLFGTLVAIWLGIGATLPIDISLTLGLF.

3 helical membrane passes run 36 to 56, 95 to 115, and 131 to 151; these read LLYMFPVVILGTLFCLVSLAV, LIGILLMAGVPVGLATVPFIE, and AVFLFGTLVAIWLGIGATLPI.

This sequence belongs to the cytochrome b family. PetD subfamily. As to quaternary structure, the 4 large subunits of the cytochrome b6-f complex are cytochrome b6, subunit IV (17 kDa polypeptide, petD), cytochrome f and the Rieske protein, while the 4 small subunits are petG, petL, petM and petN. The complex functions as a dimer.

The protein localises to the plastid. Its subcellular location is the chloroplast thylakoid membrane. Its function is as follows. Component of the cytochrome b6-f complex, which mediates electron transfer between photosystem II (PSII) and photosystem I (PSI), cyclic electron flow around PSI, and state transitions. This is Cytochrome b6-f complex subunit 4 from Bigelowiella natans (Pedinomonas minutissima).